The sequence spans 109 residues: Nucleoid-associated protein HI_0442 (109 aa).

This sequence belongs to the YbaB/EbfC family. Homodimer.

It is found in the cytoplasm. It localises to the nucleoid. Functionally, binds to DNA and alters its conformation. May be involved in regulation of gene expression, nucleoid organization and DNA protection. The chain is Nucleoid-associated protein HI_0442 from Haemophilus influenzae (strain ATCC 51907 / DSM 11121 / KW20 / Rd).